The following is a 355-amino-acid chain: MKIVADENLAFTDYFFSEFGDIQHKAGRTLTHTDVQDAEALLVRSVTAVNESLIQNTALKYVGSATIGTDHLDIQALEKQGITWANAAGCNAQAVAEYVITALLHLDASLLEQQEKFTLGIVGLGNVGKRLAYMAQLLGWKVIGFDPFVQLDSIENVSFQTLLQQANAVSIHVPLTKKGEHATYHLFDEKAFAALQPNTILINSARGPVVKEAALIEDIQRTQRKVVLDVFEHEPVISEELLNMLALATPHIAGYSLEGKARGTQMIYEAFCQKFGYDINKRFETQLPACEDYFSRHDLKAVLKQKISQIYDIAQDDANIRACVKEGKVEQKAFDLLRKNYPLRREWAAHGGPQA.

Residues S45 and T66 each coordinate substrate. D146 contributes to the NAD(+) binding site. R206 is an active-site residue. An NAD(+)-binding site is contributed by D229. E234 is a catalytic residue. The active-site Proton donor is H251. G254 is an NAD(+) binding site. Y255 lines the substrate pocket.

Belongs to the D-isomer specific 2-hydroxyacid dehydrogenase family. PdxB subfamily. In terms of assembly, homodimer.

Its subcellular location is the cytoplasm. The catalysed reaction is 4-phospho-D-erythronate + NAD(+) = (R)-3-hydroxy-2-oxo-4-phosphooxybutanoate + NADH + H(+). It functions in the pathway cofactor biosynthesis; pyridoxine 5'-phosphate biosynthesis; pyridoxine 5'-phosphate from D-erythrose 4-phosphate: step 2/5. Functionally, catalyzes the oxidation of erythronate-4-phosphate to 3-hydroxy-2-oxo-4-phosphonooxybutanoate. The chain is Erythronate-4-phosphate dehydrogenase from Acinetobacter baumannii (strain ATCC 17978 / DSM 105126 / CIP 53.77 / LMG 1025 / NCDC KC755 / 5377).